Reading from the N-terminus, the 65-residue chain is Large ribosomal subunit protein bL28 (65 aa).

Residues 1–21 (MPGRDQLTGQKALSGNKRSHA) form a disordered region.

It belongs to the bacterial ribosomal protein bL28 family.

This chain is Large ribosomal subunit protein bL28, found in Metamycoplasma arthritidis (strain 158L3-1) (Mycoplasma arthritidis).